Here is a 326-residue protein sequence, read N- to C-terminus: DNA-directed RNA polymerase subunit alpha (326 aa).

The segment at 1–231 (MQTALLKPKI…DQLSVFAALE (231 aa)) is alpha N-terminal domain (alpha-NTD). The interval 247 to 326 (IDPILLRPVD…ENWPPAGLEK (80 aa)) is alpha C-terminal domain (alpha-CTD).

The protein belongs to the RNA polymerase alpha chain family. Homodimer. The RNAP catalytic core consists of 2 alpha, 1 beta, 1 beta' and 1 omega subunit. When a sigma factor is associated with the core the holoenzyme is formed, which can initiate transcription.

It catalyses the reaction RNA(n) + a ribonucleoside 5'-triphosphate = RNA(n+1) + diphosphate. DNA-dependent RNA polymerase catalyzes the transcription of DNA into RNA using the four ribonucleoside triphosphates as substrates. This Cupriavidus necator (strain ATCC 17699 / DSM 428 / KCTC 22496 / NCIMB 10442 / H16 / Stanier 337) (Ralstonia eutropha) protein is DNA-directed RNA polymerase subunit alpha.